A 501-amino-acid polypeptide reads, in one-letter code: MTTIIIDSTVDLYYDHDEQLKKIRLKEPFYFKIPSGLEVQIGQNKFIIVEELHIEPDVNTLLSNVCEKGIIQEIPSDTSIIPECYGFSTRLESPLKVYLPLDTKVKLPVGTKLKQKEIYAFFNLETEVDGIIFSSVIPSILVDRLNVKIDIEGNTVNNEYLMNIPLYEKHEDLLIDFEEKTSPNNKSRNKSRNESQDKSRDKSRKKVCNTHKNKKTLDNVKPDKNIKISVSSNKFTTNKPKSNKNSSDSDGSTKTTKSTRSTKSTKSSKSQKSTRNSDVKLIELSDSNQYSEDIPLVRKKKNKNPKESINHKKNDSKQNIFVEKFKNKNNKNDSTNCRKSNRTTTRDVTNSDSEQKVENKNRSWLSESISSESDKSDSEQSDLTEDETEENVSEEDETEEDETACYIDNKDYRKLLSKLSQYLEPKYDIVKIANYIWVNWDLKKINKMGVKDVLSLFLEGNNNRLNESDFYLKNYKLFDSDDTDDTDDTNNSCSSEVDDSD.

2 disordered regions span residues 179-404 (EKTS…DETA) and 480-501 (SDDT…DDSD). Basic and acidic residues predominate over residues 191 to 200 (SRNESQDKSR). The segment covering 201–214 (DKSRKKVCNTHKNK) has biased composition (basic residues). A compositionally biased stretch (basic and acidic residues) spans 215 to 226 (KTLDNVKPDKNI). Residues 231 to 274 (SSNKFTTNKPKSNKNSSDSDGSTKTTKSTRSTKSTKSSKSQKST) show a composition bias toward low complexity. Residues 304–316 (NPKESINHKKNDS) show a composition bias toward basic and acidic residues. Over residues 333 to 352 (DSTNCRKSNRTTTRDVTNSD) the composition is skewed to polar residues. Residues 379–403 (EQSDLTEDETEENVSEEDETEEDET) show a composition bias toward acidic residues.

This is an uncharacterized protein from Acanthamoeba polyphaga mimivirus (APMV).